The primary structure comprises 865 residues: cGMP-specific 3',5'-cyclic phosphodiesterase (865 aa).

Position 92 is a phosphoserine (Ser92). 2 GAF domains span residues 154-304 and 336-493; these read DVTA…GIVL and SLEV…GLGI. One can recognise a PDEase domain in the interval 526 to 850; the sequence is ETRELQSLAA…QKWQALAEQQ (325 aa). His603 serves as the catalytic Proton donor. Zn(2+) is bound by residues His607, His643, Asp644, and Asp754. Residue Asp644 coordinates Mg(2+). Position 807 (Gln807) interacts with 3',5'-cyclic GMP.

It belongs to the cyclic nucleotide phosphodiesterase family. The cofactor is Zn(2+). Requires Mg(2+) as cofactor. Post-translationally, phosphorylation is regulated by binding of cGMP to the two allosteric sites. Phosphorylation by PRKG1 leads to its activation.

The catalysed reaction is 3',5'-cyclic GMP + H2O = GMP + H(+). It participates in purine metabolism; 3',5'-cyclic GMP degradation; GMP from 3',5'-cyclic GMP: step 1/1. Most potently inhibited by zaprinast and dipyridamole. Functionally, plays a role in signal transduction by regulating the intracellular concentration of cyclic nucleotides. This phosphodiesterase catalyzes the specific hydrolysis of cGMP to 5'-GMP. Specifically regulates nitric-oxide-generated cGMP. The sequence is that of cGMP-specific 3',5'-cyclic phosphodiesterase (PDE5A) from Bos taurus (Bovine).